Here is a 166-residue protein sequence, read N- to C-terminus: Cold-inducible RNA-binding protein B (166 aa).

Residues 5-83 form the RRM domain; it reads GKLFIGGLNF…RQIRVDQAGK (79 aa). The tract at residues 68 to 166 is disordered; sequence GKAVDGRQIR…DSYDSYATHE (99 aa). Residues 92 to 115 are compositionally biased toward gly residues; the sequence is YRGGSSGGRGFFRGGRGRGGGDRG. The segment covering 133–149 has biased composition (low complexity); that stretch reads GSRDYYSSGRSQGSYGD. Over residues 157-166 the composition is skewed to basic and acidic residues; the sequence is DSYDSYATHE.

As to quaternary structure, interacts with prmt1. Interacts with elavl1/elrA (via RRM3). Associates with ribosomes. In terms of processing, methylated on arginine residues within RGG motifs. Methylation by prmt1 promotes cytoplasmic accumulation. As to expression, in adults, most abundant in testis, ovary, brain and liver, with lower expression in kidney and heart.

The protein resides in the nucleus. The protein localises to the nucleoplasm. Its subcellular location is the cytoplasm. Cold-inducible mRNA binding protein. Acts cooperatively with elavl1/elrA to stabilize AU-rich element (ARE)-containing mRNAs by binding to them and inhibiting their deadenylation. Essential for embryonic gastrulation and neural development, acting to maintain the expression of a set of adhesion molecules, and cell movement during embryogenesis. Required for pronephros development. This chain is Cold-inducible RNA-binding protein B (cirbp-b), found in Xenopus laevis (African clawed frog).